Consider the following 510-residue polypeptide: Putative cytochrome P450 cyp-13B1 (510 aa).

Cysteine 456 provides a ligand contact to heme.

It belongs to the cytochrome P450 family. The cofactor is heme.

Cytochromes P450 are a group of heme-thiolate monooxygenases. They oxidize a variety of structurally unrelated compounds, including steroids, fatty acids, and xenobiotics. May play a role in the regulation of lifespan. This is Putative cytochrome P450 cyp-13B1 from Caenorhabditis elegans.